An 89-amino-acid polypeptide reads, in one-letter code: Small ribosomal subunit protein uS19 (89 aa).

The protein belongs to the universal ribosomal protein uS19 family.

Its function is as follows. Protein S19 forms a complex with S13 that binds strongly to the 16S ribosomal RNA. The sequence is that of Small ribosomal subunit protein uS19 from Xylella fastidiosa (strain M12).